We begin with the raw amino-acid sequence, 494 residues long: UPF0371 protein Sez_1293 (494 aa).

Belongs to the UPF0371 family.

The polypeptide is UPF0371 protein Sez_1293 (Streptococcus equi subsp. zooepidemicus (strain MGCS10565)).